A 1150-amino-acid chain; its full sequence is DNA polymerase (1150 aa).

Residues Met1–Asn53 are disordered.

This sequence belongs to the DNA polymerase type-B family. In terms of assembly, heterodimer with the terminal protein; this heterodimer binds to bp 9 to 18 of the genome. Forms a complex with viral pTP, DBP and hosts NFIA and POU2F1/OCT1 for initiation of replication.

It is found in the host nucleus. It carries out the reaction DNA(n) + a 2'-deoxyribonucleoside 5'-triphosphate = DNA(n+1) + diphosphate. Functionally, eukaryotic-type DNA polymerase involved in viral genomic replication. DNA synthesis is protein primed, and acts in a strand displacement replication. Assembles in complex with viral pTP, DBP, host NFIA and host POU2F1/OCT1 on viral origin of replication. The polymerase covalently transfers dCMP onto pTP, thereby initiating complementary strand synthesis. In Canis lupus familiaris (Dog), this protein is DNA polymerase.